A 360-amino-acid chain; its full sequence is 3-isopropylmalate dehydrogenase (360 aa).

76–89 (GPKWDTIERDIRPE) contacts NAD(+). 4 residues coordinate substrate: arginine 96, arginine 106, arginine 134, and aspartate 224. Positions 224, 248, and 252 each coordinate Mg(2+). 282–294 (GSAPDIAGKGIAN) contacts NAD(+).

This sequence belongs to the isocitrate and isopropylmalate dehydrogenases family. LeuB type 1 subfamily. In terms of assembly, homodimer. Mg(2+) serves as cofactor. The cofactor is Mn(2+).

It localises to the cytoplasm. It catalyses the reaction (2R,3S)-3-isopropylmalate + NAD(+) = 4-methyl-2-oxopentanoate + CO2 + NADH. Its pathway is amino-acid biosynthesis; L-leucine biosynthesis; L-leucine from 3-methyl-2-oxobutanoate: step 3/4. In terms of biological role, catalyzes the oxidation of 3-carboxy-2-hydroxy-4-methylpentanoate (3-isopropylmalate) to 3-carboxy-4-methyl-2-oxopentanoate. The product decarboxylates to 4-methyl-2 oxopentanoate. The sequence is that of 3-isopropylmalate dehydrogenase from Pseudomonas fluorescens (strain Pf0-1).